Consider the following 181-residue polypeptide: Acireductone dioxygenase 2 (181 aa).

Positions 97, 99, 103, and 141 each coordinate Fe(2+). Ni(2+) contacts are provided by His97, His99, Glu103, and His141.

It belongs to the acireductone dioxygenase (ARD) family. Monomer. Requires Fe(2+) as cofactor. Ni(2+) serves as cofactor.

It catalyses the reaction 1,2-dihydroxy-5-(methylsulfanyl)pent-1-en-3-one + O2 = 3-(methylsulfanyl)propanoate + CO + formate + 2 H(+). It carries out the reaction 1,2-dihydroxy-5-(methylsulfanyl)pent-1-en-3-one + O2 = 4-methylsulfanyl-2-oxobutanoate + formate + 2 H(+). It functions in the pathway amino-acid biosynthesis; L-methionine biosynthesis via salvage pathway; L-methionine from S-methyl-5-thio-alpha-D-ribose 1-phosphate: step 5/6. Catalyzes 2 different reactions between oxygen and the acireductone 1,2-dihydroxy-3-keto-5-methylthiopentene (DHK-MTPene) depending upon the metal bound in the active site. Fe-containing acireductone dioxygenase (Fe-ARD) produces formate and 2-keto-4-methylthiobutyrate (KMTB), the alpha-ketoacid precursor of methionine in the methionine recycle pathway. Ni-containing acireductone dioxygenase (Ni-ARD) produces methylthiopropionate, carbon monoxide and formate, and does not lie on the methionine recycle pathway. The chain is Acireductone dioxygenase 2 from Pectobacterium atrosepticum (strain SCRI 1043 / ATCC BAA-672) (Erwinia carotovora subsp. atroseptica).